The chain runs to 260 residues: MKKADPPASEPPELEALWSSWLVDLGWQPSEPQQQQLQQLYSLVMAGNRTQNLTRITDPIDFWEKHLWDSLRGLRLLGSWDEIQAQPWRGIDIGTGAGFPGIPAQIALPQAHFTLLDSSQRKIAFVQEVLQQLSLAQARAVAQRAEIWGQDPQERGSYDLALARAVAAAEICAEYCLPLLKVGGRAILYRGHWTEAEAQTLKRALSLLGGKLIHVEAFTTPHSHGMRHCLLLEKVAPTPACYPRPPGIPKRQPLGQDKRR.

Residues Gly-94, Phe-99, 117-119 (DSS), 145-146 (AE), and Arg-164 each bind S-adenosyl-L-methionine.

This sequence belongs to the methyltransferase superfamily. RNA methyltransferase RsmG family.

Its subcellular location is the cytoplasm. Its function is as follows. Specifically methylates the N7 position of a guanine in 16S rRNA. The chain is Ribosomal RNA small subunit methyltransferase G from Synechococcus sp. (strain JA-3-3Ab) (Cyanobacteria bacterium Yellowstone A-Prime).